Reading from the N-terminus, the 403-residue chain is F-box protein At1g60400 (403 aa).

Residues 13-59 (IDRLSALPEHLLCRILSELSTKDSVRTSVLSKHWRNLWLHVPVLELE) enclose the F-box domain.

This chain is F-box protein At1g60400, found in Arabidopsis thaliana (Mouse-ear cress).